The following is a 64-amino-acid chain: Disintegrin schistatin (64 aa).

One can recognise a Disintegrin domain in the interval 1 to 64; sequence NSVHPCCDPV…PDCPRNRYNV (64 aa). Disulfide bonds link Cys6–Cys29, Cys20–Cys26, Cys25–Cys50, and Cys38–Cys57. A Cell attachment site motif is present at residues 42–44; sequence RGD.

It belongs to the disintegrin family. Dimeric disintegrin subfamily. In terms of assembly, homodimer; disulfide-linked. In terms of tissue distribution, expressed by the venom gland.

The protein resides in the secreted. Functionally, may bind to both alpha-IIb/beta-3 (ITGA2B/ITGB3) and alpha-V/beta-3 (ITGAV/ITGB3) integrins, and may inhibit platelet aggregation. The polypeptide is Disintegrin schistatin (Echis carinatus (Saw-scaled viper)).